Consider the following 932-residue polypeptide: Probable UDP-N-acetylglucosamine--peptide N-acetylglucosaminyltransferase SPINDLY (932 aa).

Basic and acidic residues predominate over residues 1–15 (MAWTEKDVENGKESD). Positions 1 to 39 (MAWTEKDVENGKESDSLGNNGFLKGVQSSSDSKGSPVRI) are disordered. TPR repeat units follow at residues 48–81 (GKDAITYANILRSRNKFVDALAIYESVLQKDSGS), 82–115 (IESLIGKGICLQMQNMGRLAFESFAEAIKLDPQN), 116–149 (ACALTHCGILYKDEGRLVEAAESYQKALKADPSY), 157–190 (AIVLTDIGTSLKLAGNSQEGIQKYYEAIKIDSHY), 191–224 (APAYYNLGVVYSEMMQYDMALNCYEKAAIERPMY), 225–258 (AEAYCNMGVIYKNRGDLESAIACYERCLAVSPNF), 266–299 (AIALTDLGTKVKLEGDINQGVAYYKKALYYNWHY), 300–333 (ADAMYNLGVAYGEMLKFDMAIVFYELAFHFNPHC), 334–367 (AEACNNLGVIYKDRDNLDKAVECYQMALTIKPNF), 369–401 (QSLNNLGVVYTVQGKMDAAASMIEKAIIANPTY), and 402–435 (AEAYNNLGVLYRDAGNISLAIEAYEQCLKIDPDS). The catalytic region stretch occupies residues 436–932 (RNAGQNRLLA…NQAGNPGKQS (497 aa)). Positions 881–902 (VSPIEKTRISASKDGPIKENGF) are disordered.

This sequence belongs to the glycosyltransferase 41 family. O-GlcNAc transferase subfamily. As to expression, expressed in stems, leaves and flowers. Expressed during all stages of corolla maturation.

It is found in the nucleus. The enzyme catalyses L-seryl-[protein] + UDP-N-acetyl-alpha-D-glucosamine = 3-O-(N-acetyl-beta-D-glucosaminyl)-L-seryl-[protein] + UDP + H(+). It carries out the reaction L-threonyl-[protein] + UDP-N-acetyl-alpha-D-glucosamine = 3-O-(N-acetyl-beta-D-glucosaminyl)-L-threonyl-[protein] + UDP + H(+). Its pathway is protein modification; protein glycosylation. In terms of biological role, probable O-linked N-acetylglucosamine transferase (OGT) involved in various processes such as gibberellin (GA) signaling pathway. OGTs catalyze the addition of nucleotide-activated sugars directly onto the polypeptide through O-glycosidic linkage with the hydroxyl of serine or threonine. Probably acts by adding O-linked sugars to yet unknown proteins. The polypeptide is Probable UDP-N-acetylglucosamine--peptide N-acetylglucosaminyltransferase SPINDLY (SPY) (Petunia hybrida (Petunia)).